The sequence spans 507 residues: Zinc finger CCCH-type with G patch domain-containing protein (507 aa).

The residue at position 1 (M1) is an N-acetylmethionine. Residues 88–125 are disordered; it reads PVDPGNDSKTVPGSEVQPTPTSSALEEEEEDPDLEDLS. Positions 94-111 are enriched in polar residues; it reads DSKTVPGSEVQPTPTSSA. Positions 112–123 are enriched in acidic residues; sequence LEEEEEDPDLED. The C3H1-type zinc finger occupies 170-196; sequence KSLKPCPFFLEGKCRFKENCRFSHGQL. A disordered region spans residues 264 to 283; that stretch reads LRTEATDSSDSDTGDASDSS. The residue at position 272 (S272) is a Phosphoserine. Residue T276 is modified to Phosphothreonine. In terms of domain architecture, G-patch spans 309 to 355; sequence TRGIGSKLLVKMGYEFGKGLGRHAEGRVEPIHAVVLPRGKSLDQCAE. S349 is modified (phosphoserine). Disordered regions lie at residues 359–389 and 486–507; these read KKTK…PPRN and AQEA…MTEF. Over residues 487-507 the composition is skewed to basic and acidic residues; sequence QEADLQRKQRKADTHRKMTEF.

Interacts with CHD4/Mi-2; the interaction is direct.

The protein resides in the nucleus. In terms of biological role, transcription repressor that specifically binds the 5'-GGAG[GA]A[GA]A-3' consensus sequence. Represses transcription by recruiting the chromatin multiprotein complex NuRD to target promoters. Negatively regulates expression of EGFR, a gene involved in cell proliferation, survival and migration. Its ability to repress genes of the EGFR pathway suggest it may act as a tumor suppressor. This chain is Zinc finger CCCH-type with G patch domain-containing protein (Zgpat), found in Rattus norvegicus (Rat).